Consider the following 276-residue polypeptide: Large ribosomal subunit protein uL2 (276 aa).

2 disordered regions span residues 1–50 (MPIK…GRVT) and 206–276 (GKAG…SKKR). The span at 7–19 (RPTTPTRRFQTVV) shows a compositional bias: polar residues. Basic and acidic residues predominate over residues 20-38 (SREDITKQTPEKSLVESKK).

This sequence belongs to the universal ribosomal protein uL2 family. In terms of assembly, part of the 50S ribosomal subunit. Forms a bridge to the 30S subunit in the 70S ribosome.

One of the primary rRNA binding proteins. Required for association of the 30S and 50S subunits to form the 70S ribosome, for tRNA binding and peptide bond formation. It has been suggested to have peptidyltransferase activity; this is somewhat controversial. Makes several contacts with the 16S rRNA in the 70S ribosome. This chain is Large ribosomal subunit protein uL2, found in Solibacter usitatus (strain Ellin6076).